Here is a 730-residue protein sequence, read N- to C-terminus: Hepatocyte growth factor (730 aa).

Positions 1-31 (MWVTRLLPVLLLQHVLLHLLLLPIAIPYAEG) are cleaved as a signal peptide. Glutamine 32 is modified (pyrrolidone carboxylic acid). The 87-residue stretch at 37–123 (NTLHEFKRSA…HEFDLYENKD (87 aa)) folds into the PAN domain. 8 disulfide bridges follow: cysteine 70-cysteine 96, cysteine 74-cysteine 84, cysteine 128-cysteine 206, cysteine 149-cysteine 189, cysteine 177-cysteine 201, cysteine 211-cysteine 288, cysteine 232-cysteine 271, and cysteine 260-cysteine 283. Kringle domains lie at 128-206 (CIIG…IPQC) and 211-288 (CMTC…IKMC). Asparagine 294 carries N-linked (GlcNAc...) asparagine glycosylation. Intrachain disulfides connect cysteine 305/cysteine 383, cysteine 326/cysteine 365, cysteine 354/cysteine 377, cysteine 391/cysteine 469, cysteine 412/cysteine 452, cysteine 440/cysteine 464, cysteine 487/cysteine 606, cysteine 519/cysteine 535, cysteine 614/cysteine 681, cysteine 644/cysteine 660, and cysteine 671/cysteine 699. Kringle domains lie at 305–383 (CIQG…IPKC) and 391–469 (CYRG…ISRC). A Peptidase S1 domain is found at 495–723 (VVNGIPTRTN…YAKWIHKIIL (229 aa)). N-linked (GlcNAc...) asparagine glycosylation is found at asparagine 568 and asparagine 655.

This sequence belongs to the peptidase S1 family. Plasminogen subfamily. In terms of assembly, dimer of an alpha chain and a beta chain linked by a disulfide bond. Interacts with SRPX2; the interaction increases HGF mitogenic activity. In terms of processing, the single-chain precursor undergoes proteolytic processing by TMPRSS13 resulting in an active two-chain form. The single-chain precursor undergoes proteolytic processing by HGFAC resulting in an active two-chain form.

Potent mitogen for mature parenchymal hepatocyte cells, seems to be a hepatotrophic factor, and acts as a growth factor for a broad spectrum of tissues and cell types. Activating ligand for the receptor tyrosine kinase MET by binding to it and promoting its dimerization. Activates MAPK signaling following TMPRSS13 cleavage and activation. The polypeptide is Hepatocyte growth factor (HGF) (Bos taurus (Bovine)).